Reading from the N-terminus, the 832-residue chain is tRNA ligase (832 aa).

K108 (N6-AMP-lysine intermediate) is an active-site residue.

This sequence belongs to the TRL1 family.

It carries out the reaction ATP + (ribonucleotide)n-3'-hydroxyl + 5'-phospho-(ribonucleotide)m = (ribonucleotide)n+m + AMP + diphosphate.. In terms of biological role, one of the two proteins required for the splicing of precursor tRNA molecules containing introns. The ligation activity requires three enzymatic activities: phosphorylation of the 5' terminus of the 3' half-tRNA in the presence of ATP, opening of the 2'3'-cyclic phosphodiester bond of the 5' half-tRNA leaving a 2'-phosphomonoester and ligation of the two tRNA halves in an ATP-dependent reaction. The sequence is that of tRNA ligase (LIG1) from Candida albicans (strain SC5314 / ATCC MYA-2876) (Yeast).